Reading from the N-terminus, the 94-residue chain is Co-chaperonin GroES (94 aa).

It belongs to the GroES chaperonin family. Heptamer of 7 subunits arranged in a ring. Interacts with the chaperonin GroEL.

The protein resides in the cytoplasm. Its function is as follows. Together with the chaperonin GroEL, plays an essential role in assisting protein folding. The GroEL-GroES system forms a nano-cage that allows encapsulation of the non-native substrate proteins and provides a physical environment optimized to promote and accelerate protein folding. GroES binds to the apical surface of the GroEL ring, thereby capping the opening of the GroEL channel. This Ligilactobacillus salivarius (strain UCC118) (Lactobacillus salivarius) protein is Co-chaperonin GroES.